We begin with the raw amino-acid sequence, 519 residues long: uncharacterized protein (519 aa).

A run of 14 helical transmembrane segments spans residues 37 to 57 (ISMSLFHEIVFVFIACTAQLM), 82 to 102 (GQLSWFPASYSLTVGTFILIA), 114 to 134 (MFVLGYIWFCIWSLISGFSYY), 146 to 166 (ALTGIAPAFLLPNALALLGRV), 175 to 195 (LIFALFGATAPNGFLLGSVFS), 209 to 229 (WTTAIVCIVFAIIGYFAIPHI), 240 to 260 (FDYLGAFFGVSGLVLINFSWN), 269 to 289 (VPYVYILLIIGFLSLVVFVLV), 309 to 329 (CVLICVAAGWACFGIWMYYLW), 337 to 357 (FATPLLVTAQLTPVGISGCAA), 373 to 393 (IMVVSMIAFTVGTILIATAPI), 402 to 422 (FVSIIVTPWGMDMSFPAATLM), 434 to 454 (IAASLVSTVVNYSISIGLGIA), and 475 to 495 (AWYMGTGFGGLGVCVAILTVF).

The protein belongs to the major facilitator superfamily.

The protein localises to the endoplasmic reticulum. Its subcellular location is the membrane. This is an uncharacterized protein from Schizosaccharomyces pombe (strain 972 / ATCC 24843) (Fission yeast).